A 619-amino-acid polypeptide reads, in one-letter code: Dihydroxy-acid dehydratase 1 (619 aa).

Asp81 is a Mg(2+) binding site. Cys122 is a [2Fe-2S] cluster binding site. Positions 123 and 124 each coordinate Mg(2+). The residue at position 124 (Lys124) is an N6-carboxylysine. Cys201 contacts [2Fe-2S] cluster. Position 496 (Glu496) interacts with Mg(2+). Catalysis depends on Ser522, which acts as the Proton acceptor.

Belongs to the IlvD/Edd family. As to quaternary structure, homodimer. [2Fe-2S] cluster is required as a cofactor. Requires Mg(2+) as cofactor.

It catalyses the reaction (2R)-2,3-dihydroxy-3-methylbutanoate = 3-methyl-2-oxobutanoate + H2O. The catalysed reaction is (2R,3R)-2,3-dihydroxy-3-methylpentanoate = (S)-3-methyl-2-oxopentanoate + H2O. The protein operates within amino-acid biosynthesis; L-isoleucine biosynthesis; L-isoleucine from 2-oxobutanoate: step 3/4. It participates in amino-acid biosynthesis; L-valine biosynthesis; L-valine from pyruvate: step 3/4. Its function is as follows. Functions in the biosynthesis of branched-chain amino acids. Catalyzes the dehydration of (2R,3R)-2,3-dihydroxy-3-methylpentanoate (2,3-dihydroxy-3-methylvalerate) into 2-oxo-3-methylpentanoate (2-oxo-3-methylvalerate) and of (2R)-2,3-dihydroxy-3-methylbutanoate (2,3-dihydroxyisovalerate) into 2-oxo-3-methylbutanoate (2-oxoisovalerate), the penultimate precursor to L-isoleucine and L-valine, respectively. In Burkholderia lata (strain ATCC 17760 / DSM 23089 / LMG 22485 / NCIMB 9086 / R18194 / 383), this protein is Dihydroxy-acid dehydratase 1.